The primary structure comprises 307 residues: Fe-S cluster assembly protein dre2 (307 aa).

2 disordered regions span residues 1-26 and 159-179; these read MTPV…PSTS and KKKK…VGFV. The span at 15-26 shows a compositional bias: low complexity; the sequence is AAPPTKTAPSTS. Residues 23-152 form an N-terminal SAM-like domain region; it reads PSTSTRTLLL…EKPAYQEAAV (130 aa). Residues 153–197 are linker; the sequence is PLRLGGKKKKAPAPTEQPPVATGVGFVDGNDELIDEDDLLSDDDL. Residues Cys207, Cys219, Cys222, and Cys224 each coordinate [2Fe-2S] cluster. The interval 207-224 is fe-S binding site A; that stretch reads CQPEKAKKRRRPCKDCTC. 4 residues coordinate [4Fe-4S] cluster: Cys270, Cys273, Cys281, and Cys284. 2 consecutive short sequence motifs (cx2C motif) follow at residues 270–273 and 281–284; these read CNSC and CSSC. The tract at residues 270-284 is fe-S binding site B; that stretch reads CNSCSLGDAFRCSSC.

This sequence belongs to the anamorsin family. As to quaternary structure, monomer. Interacts with tah18. Interacts with mia40. [2Fe-2S] cluster is required as a cofactor. Requires [4Fe-4S] cluster as cofactor.

The protein localises to the cytoplasm. It localises to the mitochondrion intermembrane space. In terms of biological role, component of the cytosolic iron-sulfur (Fe-S) protein assembly (CIA) machinery required for the maturation of extramitochondrial Fe-S proteins. Part of an electron transfer chain functioning in an early step of cytosolic Fe-S biogenesis, facilitating the de novo assembly of a [4Fe-4S] cluster on the scaffold complex cfd1-nbp35. Electrons are transferred to dre2 from NADPH via the FAD- and FMN-containing protein tah18. Tah18-dre2 are also required for the assembly of the diferric tyrosyl radical cofactor of ribonucleotide reductase (RNR), probably by providing electrons for reduction during radical cofactor maturation in the catalytic small subunit rnr2. The protein is Fe-S cluster assembly protein dre2 of Aspergillus terreus (strain NIH 2624 / FGSC A1156).